The following is a 337-amino-acid chain: Transaldolase (337 aa).

Residues 1 to 10 (MSGSPVKRQR) carry the Nuclear localization signal motif. Position 115 is an N6-acetyllysine (lysine 115). Lysine 142 serves as the catalytic Schiff-base intermediate with substrate. The residue at position 219 (lysine 219) is an N6-acetyllysine. Phosphoserine is present on residues serine 237 and serine 256. N6-acetyllysine occurs at positions 269, 286, and 321.

It belongs to the transaldolase family. Type 1 subfamily. In terms of assembly, homodimer. Interacts with KPNA1 and KPNA4.

The protein resides in the nucleus. It localises to the cytoplasm. It catalyses the reaction D-sedoheptulose 7-phosphate + D-glyceraldehyde 3-phosphate = D-erythrose 4-phosphate + beta-D-fructose 6-phosphate. It functions in the pathway carbohydrate degradation; pentose phosphate pathway; D-glyceraldehyde 3-phosphate and beta-D-fructose 6-phosphate from D-ribose 5-phosphate and D-xylulose 5-phosphate (non-oxidative stage): step 2/3. In terms of biological role, catalyzes the rate-limiting step of the non-oxidative phase in the pentose phosphate pathway. Catalyzes the reversible conversion of sedheptulose-7-phosphate and D-glyceraldehyde 3-phosphate into erythrose-4-phosphate and beta-D-fructose 6-phosphate. The chain is Transaldolase (TALDO1) from Cricetulus griseus (Chinese hamster).